Here is a 241-residue protein sequence, read N- to C-terminus: 2-C-methyl-D-erythritol 4-phosphate cytidylyltransferase (241 aa).

Belongs to the IspD/TarI cytidylyltransferase family. IspD subfamily.

The enzyme catalyses 2-C-methyl-D-erythritol 4-phosphate + CTP + H(+) = 4-CDP-2-C-methyl-D-erythritol + diphosphate. The protein operates within isoprenoid biosynthesis; isopentenyl diphosphate biosynthesis via DXP pathway; isopentenyl diphosphate from 1-deoxy-D-xylulose 5-phosphate: step 2/6. In terms of biological role, catalyzes the formation of 4-diphosphocytidyl-2-C-methyl-D-erythritol from CTP and 2-C-methyl-D-erythritol 4-phosphate (MEP). The chain is 2-C-methyl-D-erythritol 4-phosphate cytidylyltransferase from Mycobacterium leprae (strain Br4923).